Here is a 303-residue protein sequence, read N- to C-terminus: Recombination-associated protein RdgC (303 aa).

Belongs to the RdgC family.

Its subcellular location is the cytoplasm. It is found in the nucleoid. Functionally, may be involved in recombination. The polypeptide is Recombination-associated protein RdgC (Serratia proteamaculans (strain 568)).